The following is a 214-amino-acid chain: Non-structural protein NP-1 (214 aa).

Disordered regions lie at residues 1–87 (MSSE…TNPY) and 192–214 (ESEE…NASN). The span at 33–43 (SRSRSPIRRHG) shows a compositional bias: basic residues. The span at 44 to 55 (EKNLEYAHHSNQ) shows a compositional bias: basic and acidic residues. A compositionally biased stretch (polar residues) spans 56 to 71 (ENRQSSYTALKTSDQA). Acidic residues predominate over residues 192–201 (ESEEVTDEEM).

This sequence belongs to the Bocaparvovirus Non-structural protein NP-1 family.

The protein resides in the host nucleus. Required for the expression of the capsid proteins. Performs the splicing and internal polyadenylation of the viral capsid-encoding mRNA precursor, which allows its maturation and expression. Transactivates the viral promoter. The protein is Non-structural protein NP-1 (NP1) of Human bocavirus 2 (HBoV2).